We begin with the raw amino-acid sequence, 320 residues long: Alpha/beta hydrolase domain-containing protein 17C (320 aa).

The tract at residues 50–75 is disordered; it reads RAPAPAATPAPAPAAQPAPAEEGAGP. A compositionally biased stretch (pro residues) spans 55–65; the sequence is AATPAPAPAAQ. Active-site charge relay system residues include Ser202, Asp267, and His296.

This sequence belongs to the AB hydrolase superfamily. ABHD17 family. Palmitoylated on cysteine residues located in a cysteine cluster at the N-terminus which promotes membrane localization. Palmitoylation is required for post-synaptic localization and for depalmitoylating activity towards DLG4/PSD95.

It localises to the recycling endosome membrane. The protein resides in the cell projection. It is found in the dendritic spine. The protein localises to the postsynaptic density membrane. The catalysed reaction is S-hexadecanoyl-L-cysteinyl-[protein] + H2O = L-cysteinyl-[protein] + hexadecanoate + H(+). Its function is as follows. Hydrolyzes fatty acids from S-acylated cysteine residues in proteins. Has depalmitoylating activity towards DLG4/PSD95. The polypeptide is Alpha/beta hydrolase domain-containing protein 17C (Mus musculus (Mouse)).